Consider the following 42-residue polypeptide: Photosystem I reaction center subunit IX (42 aa).

A helical membrane pass occupies residues 7–27 (YLSIAPVLATLWFGFLVGSLI).

It belongs to the PsaJ family.

The protein resides in the plastid membrane. Functionally, may help in the organization of the PsaE and PsaF subunits. The polypeptide is Photosystem I reaction center subunit IX (Aneura mirabilis (Parasitic liverwort)).